Here is a 167-residue protein sequence, read N- to C-terminus: NAD(P)H-quinone oxidoreductase subunit I, chloroplastic (167 aa).

2 4Fe-4S ferredoxin-type domains span residues Gly-55–Lys-84 and Leu-95–Glu-124. Residues Cys-64, Cys-67, Cys-70, Cys-74, Cys-104, Cys-107, Cys-110, and Cys-114 each coordinate [4Fe-4S] cluster.

This sequence belongs to the complex I 23 kDa subunit family. NDH is composed of at least 16 different subunits, 5 of which are encoded in the nucleus. The cofactor is [4Fe-4S] cluster.

The protein localises to the plastid. It is found in the chloroplast thylakoid membrane. The catalysed reaction is a plastoquinone + NADH + (n+1) H(+)(in) = a plastoquinol + NAD(+) + n H(+)(out). The enzyme catalyses a plastoquinone + NADPH + (n+1) H(+)(in) = a plastoquinol + NADP(+) + n H(+)(out). Functionally, NDH shuttles electrons from NAD(P)H:plastoquinone, via FMN and iron-sulfur (Fe-S) centers, to quinones in the photosynthetic chain and possibly in a chloroplast respiratory chain. The immediate electron acceptor for the enzyme in this species is believed to be plastoquinone. Couples the redox reaction to proton translocation, and thus conserves the redox energy in a proton gradient. This chain is NAD(P)H-quinone oxidoreductase subunit I, chloroplastic, found in Barbarea verna (Land cress).